The primary structure comprises 86 residues: ATP synthase subunit c (86 aa).

The next 2 helical transmembrane spans lie at 4–24 and 57–77; these read AIVA…GIGA and VAIA…LLFV.

Belongs to the ATPase C chain family. F-type ATPases have 2 components, F(1) - the catalytic core - and F(0) - the membrane proton channel. F(1) has five subunits: alpha(3), beta(3), gamma(1), delta(1), epsilon(1). F(0) has three main subunits: a(1), b(2) and c(10-14). The alpha and beta chains form an alternating ring which encloses part of the gamma chain. F(1) is attached to F(0) by a central stalk formed by the gamma and epsilon chains, while a peripheral stalk is formed by the delta and b chains.

Its subcellular location is the cell membrane. F(1)F(0) ATP synthase produces ATP from ADP in the presence of a proton or sodium gradient. F-type ATPases consist of two structural domains, F(1) containing the extramembraneous catalytic core and F(0) containing the membrane proton channel, linked together by a central stalk and a peripheral stalk. During catalysis, ATP synthesis in the catalytic domain of F(1) is coupled via a rotary mechanism of the central stalk subunits to proton translocation. In terms of biological role, key component of the F(0) channel; it plays a direct role in translocation across the membrane. A homomeric c-ring of between 10-14 subunits forms the central stalk rotor element with the F(1) delta and epsilon subunits. The sequence is that of ATP synthase subunit c from Clostridioides difficile (strain 630) (Peptoclostridium difficile).